The primary structure comprises 486 residues: uncharacterized protein (486 aa).

LRR repeat units follow at residues 18–39, 43–59, 60–81, 82–103, 104–125, 126–147, 148–168, 169–190, and 198–219; these read NLKKIIINRDNVININILKKLV, ELHIIYYDNNILNNIPE, NIKSLYISNLNIINLNFITKLK, NITYLDISYNKNSNISNIILPH, SIEFLNCESCNINDYNFINNLV, NLKKLIISKNKFGNFNNVFPIS, IVELNMESIQIKDYKFIEKLI, NLKKLDISFNVKKNNIHLIKFP, and DYQSYKENYNYLKNLSNIIEYE.

This is an uncharacterized protein from Amsacta moorei entomopoxvirus (AmEPV).